Consider the following 396-residue polypeptide: uncharacterized protein (396 aa).

[4Fe-4S] cluster contacts are provided by Cys-8, Cys-14, Cys-17, and Cys-95. Gln-229, Tyr-258, Glu-279, and Asp-325 together coordinate S-adenosyl-L-methionine. The Nucleophile role is filled by Cys-352.

It belongs to the class I-like SAM-binding methyltransferase superfamily. RNA M5U methyltransferase family.

This is an uncharacterized protein from Chlamydia trachomatis serovar D (strain ATCC VR-885 / DSM 19411 / UW-3/Cx).